Here is a 215-residue protein sequence, read N- to C-terminus: Nascent polypeptide-associated complex subunit alpha (215 aa).

The interval 1-81 (MPGEATDTVP…SEKKARKAMS (81 aa)) is disordered. The segment covering 9 to 28 (VPATEQELPQPQAETGSGTE) has biased composition (polar residues). Over residues 29–42 (SDSDESVPELEEQD) the composition is skewed to acidic residues. Ser-43 carries the phosphoserine; by ILK1 modification. Residues 44 to 57 (TQATTQQAQLAAAA) are compositionally biased toward low complexity. The interval 69 to 80 (QSRSEKKARKAM) is required for DNA-binding. An NAC-A/B domain is found at 70 to 135 (SRSEKKARKA…AKIEDLSQQA (66 aa)). Residues 93–108 (RVTIRKSKNILFVITK) form an RNA/DNA-binding region. The residue at position 132 (Ser-132) is a Phosphoserine. Position 142 is an N6-acetyllysine; alternate (Lys-142). Residue Lys-142 forms a Glycyl lysine isopeptide (Lys-Gly) (interchain with G-Cter in SUMO2); alternate linkage. Residue Thr-159 is modified to Phosphothreonine; by GSK3-beta. Position 161 is a phosphothreonine (Thr-161). A phosphoserine mark is found at Ser-166, Ser-186, Ser-191, and Ser-203. Residues 176-213 (VEVKDIELVMSQANVSRAKAVRALKNNSNDIVNAIMEL) enclose the UBA domain.

This sequence belongs to the NAC-alpha family. As to quaternary structure, part of the nascent polypeptide-associated complex (NAC), which is a heterodimer of NACA and BTF3 (via NAC-A/B domains). NAC associates with ribosomes through the BTF3/NACB subunit and contacts the ribosomal protein L23, which is positioned near the exiting site. Both subunits can contact nascent polypeptide chains. NACA may also form homodimers, and only this form binds DNA. Interacts with TBP and JUN. Post-translationally, phosphorylation of Ser-43 by ILK during cell adhesion may promote nuclear localization. Phosphorylation of Thr-159 by GSK3B may promote proteasome mediated degradation.

It is found in the cytoplasm. Its subcellular location is the nucleus. Prevents inappropriate targeting of non-secretory polypeptides to the endoplasmic reticulum (ER). Binds to nascent polypeptide chains as they emerge from the ribosome and blocks their interaction with the signal recognition particle (SRP), which normally targets nascent secretory peptides to the ER. Also reduces the inherent affinity of ribosomes for protein translocation sites in the ER membrane (M sites). May act as a specific coactivator for JUN, binding to DNA and stabilizing the interaction of JUN homodimers with target gene promoters. This is Nascent polypeptide-associated complex subunit alpha (NACA) from Bos taurus (Bovine).